Consider the following 490-residue polypeptide: Glutamate--tRNA ligase 2 (490 aa).

Residues 33–43 (PSPTGYLHIGG) carry the 'HIGH' region motif. Residues 262 to 266 (KLSKR) carry the 'KMSKS' region motif. An ATP-binding site is contributed by lysine 265.

The protein belongs to the class-I aminoacyl-tRNA synthetase family. Glutamate--tRNA ligase type 1 subfamily. Monomer.

The protein resides in the cytoplasm. It catalyses the reaction tRNA(Glu) + L-glutamate + ATP = L-glutamyl-tRNA(Glu) + AMP + diphosphate. Functionally, catalyzes the attachment of glutamate to tRNA(Glu) in a two-step reaction: glutamate is first activated by ATP to form Glu-AMP and then transferred to the acceptor end of tRNA(Glu). The chain is Glutamate--tRNA ligase 2 from Parvibaculum lavamentivorans (strain DS-1 / DSM 13023 / NCIMB 13966).